A 1090-amino-acid polypeptide reads, in one-letter code: Protein unc-13 homolog D (1090 aa).

Residues 92–239 (EPEEHQQTLQ…FKEARKDKGQ (148 aa)) form the C2 1 domain. 2 residues coordinate Ca(2+): D127 and D133. S150 bears the Phosphoserine mark. Residues D206 and D208 each coordinate Ca(2+). The segment at 240–543 (DDFLGNVVLR…AKRVQDHTTV (304 aa)) is interaction with RAB27A. The 121-residue stretch at 557 to 677 (FQLYISLKEL…RLALVYCSLI (121 aa)) folds into the MHD1 domain. An MHD2 domain is found at 788–895 (EDAILPLMKF…ASSRELIRKY (108 aa)). In terms of domain architecture, C2 2 spans 910–1035 (ELGAVTVKAS…PGLSGSEEPG (126 aa)). Residues L940, D941, D947, D1005, D1007, and D1013 each coordinate Ca(2+). Positions 1026–1048 (PGLSGSEEPGEVPQTRLPLTYPA) are disordered.

Belongs to the unc-13 family. In terms of assembly, interacts with DOC2A. Interacts with RAB27A. Interacts with RHOG; the interaction increases RhoG affinity to the membrane lipids, targets UNC13D to membrane lipids and facilitates cytotoxic granule (CG) docking to the plasma membrane. The cofactor is Ca(2+). As to expression, expressed at high levels in spleen, thymus and leukocytes. Also expressed in lung and placenta, and at very low levels in brain, heart, skeletal muscle and kidney. Expressed in cytotoxic T-lymphocytes (CTL) and mast cells.

The protein resides in the cytoplasm. It is found in the membrane. It localises to the late endosome. The protein localises to the recycling endosome. Its subcellular location is the lysosome. Its function is as follows. Plays a role in cytotoxic granule exocytosis in lymphocytes. Required for both granule maturation and granule docking and priming at the immunologic synapse. Regulates assembly of recycling and late endosomal structures, leading to the formation of an endosomal exocytic compartment that fuses with perforin-containing granules at the immunologic synapse and licences them for exocytosis. Regulates Ca(2+)-dependent secretory lysosome exocytosis in mast cells. This chain is Protein unc-13 homolog D (UNC13D), found in Homo sapiens (Human).